We begin with the raw amino-acid sequence, 138 residues long: Basic phospholipase A2 homolog TM-N49 (138 aa).

The first 16 residues, 1–16 (MRTLWIMAVLLLGVEG), serve as a signal peptide directing secretion. Disulfide bonds link C42–C131, C44–C60, C59–C111, C65–C138, C66–C104, C73–C97, and C91–C102.

Belongs to the phospholipase A2 family. Group II subfamily. N49 sub-subfamily. Homodimer; non-covalently linked. In terms of tissue distribution, expressed by the venom gland.

It localises to the secreted. Its function is as follows. Snake venom phospholipase A2 (PLA2) that exhibits potent myotoxic activity causing inflammatory cell infiltration, severe myoedema, myonecrosis and myolysis in the gastrocnemius muscles of BALB/c mice. This is Basic phospholipase A2 homolog TM-N49 from Protobothrops mucrosquamatus (Taiwan habu).